Here is a 210-residue protein sequence, read N- to C-terminus: Dephospho-CoA kinase (210 aa).

Residues 18-210 (RIGITGGIAS…LSYPQVEVLL (193 aa)) enclose the DPCK domain. An ATP-binding site is contributed by 26–31 (ASGKTS).

It belongs to the CoaE family.

It is found in the cytoplasm. It carries out the reaction 3'-dephospho-CoA + ATP = ADP + CoA + H(+). Its pathway is cofactor biosynthesis; coenzyme A biosynthesis; CoA from (R)-pantothenate: step 5/5. Its function is as follows. Catalyzes the phosphorylation of the 3'-hydroxyl group of dephosphocoenzyme A to form coenzyme A. The chain is Dephospho-CoA kinase from Prochlorococcus marinus (strain SARG / CCMP1375 / SS120).